Consider the following 377-residue polypeptide: Chaperone protein DnaJ (377 aa).

Positions 5–70 (DYYELLGLQK…EKKAKYDQFG (66 aa)) constitute a J domain. The CR-type zinc finger occupies 137–219 (GVEKEISVTR…CRGKGSVRKT (83 aa)). 8 residues coordinate Zn(2+): Cys150, Cys153, Cys167, Cys170, Cys193, Cys196, Cys207, and Cys210. CXXCXGXG motif repeat units lie at residues 150–157 (CEHCHGSG), 167–174 (CPTCSGSG), 193–200 (CDTCRGTG), and 207–214 (CSECRGKG).

Belongs to the DnaJ family. In terms of assembly, homodimer. Zn(2+) serves as cofactor.

Its subcellular location is the cytoplasm. Functionally, participates actively in the response to hyperosmotic and heat shock by preventing the aggregation of stress-denatured proteins and by disaggregating proteins, also in an autonomous, DnaK-independent fashion. Unfolded proteins bind initially to DnaJ; upon interaction with the DnaJ-bound protein, DnaK hydrolyzes its bound ATP, resulting in the formation of a stable complex. GrpE releases ADP from DnaK; ATP binding to DnaK triggers the release of the substrate protein, thus completing the reaction cycle. Several rounds of ATP-dependent interactions between DnaJ, DnaK and GrpE are required for fully efficient folding. Also involved, together with DnaK and GrpE, in the DNA replication of plasmids through activation of initiation proteins. The chain is Chaperone protein DnaJ from Clostridium beijerinckii (strain ATCC 51743 / NCIMB 8052) (Clostridium acetobutylicum).